A 773-amino-acid polypeptide reads, in one-letter code: Polyribonucleotide nucleotidyltransferase (773 aa).

Mg(2+) is bound by residues aspartate 532 and aspartate 538. A KH domain is found at 598-657; sequence PRVITIKVPVDKIGEVIGPKGKVINAITEETGAQISIEDDGTVFVGATDGLSAQAAINKI. The 70-residue stretch at 669-738 folds into the S1 motif domain; that stretch reads GERFLGTVVK…KRGKISLVLV (70 aa). A disordered region spans residues 749–773; that stretch reads APADAGAAQEFGSGTAPADAATASS.

The protein belongs to the polyribonucleotide nucleotidyltransferase family. It depends on Mg(2+) as a cofactor.

The protein localises to the cytoplasm. It catalyses the reaction RNA(n+1) + phosphate = RNA(n) + a ribonucleoside 5'-diphosphate. Functionally, involved in mRNA degradation. Catalyzes the phosphorolysis of single-stranded polyribonucleotides processively in the 3'- to 5'-direction. The polypeptide is Polyribonucleotide nucleotidyltransferase (Mycobacterium leprae (strain Br4923)).